A 308-amino-acid chain; its full sequence is Maspardin (308 aa).

One can recognise an AB hydrolase-1 domain in the interval 87–159; the sequence is FCDGFRKLLD…NSFWLMPAFM (73 aa).

Belongs to the AB hydrolase superfamily. In terms of assembly, interacts with CD4. Interacts with ALDH16A1.

It localises to the cytoplasm. Functionally, may play a role as a negative regulatory factor in CD4-dependent T-cell activation. This chain is Maspardin (SPG21), found in Macaca fascicularis (Crab-eating macaque).